Reading from the N-terminus, the 176-residue chain is Putative REP-associated tyrosine transposase (176 aa).

Mg(2+) is bound by residues H59 and H61. The active-site Nucleophile is the Y148.

The protein belongs to the transposase 17 family. RAYT subfamily. In terms of assembly, homodimer. Mg(2+) serves as cofactor.

Transposase responsible for transposition an insertion sequence (IS) element. Transposition occurs in 2 main steps, excision from the donor DNA 'top strand' into a single strand circle and its subsequent reinsertion into the DNA target. This increases the copy number of the IS. The chain is Putative REP-associated tyrosine transposase from Haemophilus influenzae (strain ATCC 51907 / DSM 11121 / KW20 / Rd).